The following is a 341-amino-acid chain: MSKKVLLGMSGGVDSTVSAMFLKEEGYEVEGLYMKLHSNPGYHEIHEARARKAADFLGIKLHVIDLQEIFNEKVFKPFVDTYAKGKTPNPCALCNRSLKFGEMLKFAYKIGADFVATGHYIKTDGKYFYEADDDTKDQSYFLFYVNKEILPRLLFPLGDRKKSEIKELAASINGLATFASQRESSEICFVETTYTDLLQDYVEVDKVGEVLDTSGKVVGEHKGYMHYTIGKRRGFSVNGAHDPHYVVSINPDKNQIIVGKKEDLACNSVVLNNLNLYSDEKSFDTTVKLRYRTKAIPCHVDIIDDKAHVTLKESVFGVAVGQAAVFYDGNKLLGGGWIEDN.

ATP is bound by residues 8–15 and Met34; that span reads GMSGGVDS. Cys94 (nucleophile) is an active-site residue. Cys94 and Cys188 are oxidised to a cystine. Gly118 contributes to the ATP binding site. Residues 136 to 138 are interaction with tRNA; it reads KDQ. Catalysis depends on Cys188, which acts as the Cysteine persulfide intermediate. Residues 290–291 form an interaction with tRNA region; the sequence is RY.

It belongs to the MnmA/TRMU family.

It is found in the cytoplasm. The catalysed reaction is S-sulfanyl-L-cysteinyl-[protein] + uridine(34) in tRNA + AH2 + ATP = 2-thiouridine(34) in tRNA + L-cysteinyl-[protein] + A + AMP + diphosphate + H(+). Catalyzes the 2-thiolation of uridine at the wobble position (U34) of tRNA, leading to the formation of s(2)U34. In Sulfurimonas denitrificans (strain ATCC 33889 / DSM 1251) (Thiomicrospira denitrificans (strain ATCC 33889 / DSM 1251)), this protein is tRNA-specific 2-thiouridylase MnmA.